A 144-amino-acid polypeptide reads, in one-letter code: 6,7-dimethyl-8-ribityllumazine synthase (144 aa).

Residues F21, 56-58 (AYE), and 80-82 (AVI) contribute to the 5-amino-6-(D-ribitylamino)uracil site. Residue 85 to 86 (GT) participates in (2S)-2-hydroxy-3-oxobutyl phosphate binding. The active-site Proton donor is the H88. 5-amino-6-(D-ribitylamino)uracil is bound at residue F113. (2S)-2-hydroxy-3-oxobutyl phosphate is bound at residue R127.

It belongs to the DMRL synthase family. As to quaternary structure, forms an icosahedral capsid composed of 60 subunits, arranged as a dodecamer of pentamers.

The catalysed reaction is (2S)-2-hydroxy-3-oxobutyl phosphate + 5-amino-6-(D-ribitylamino)uracil = 6,7-dimethyl-8-(1-D-ribityl)lumazine + phosphate + 2 H2O + H(+). It functions in the pathway cofactor biosynthesis; riboflavin biosynthesis; riboflavin from 2-hydroxy-3-oxobutyl phosphate and 5-amino-6-(D-ribitylamino)uracil: step 1/2. Functionally, catalyzes the formation of 6,7-dimethyl-8-ribityllumazine by condensation of 5-amino-6-(D-ribitylamino)uracil with 3,4-dihydroxy-2-butanone 4-phosphate. This is the penultimate step in the biosynthesis of riboflavin. The polypeptide is 6,7-dimethyl-8-ribityllumazine synthase (ribH) (Photobacterium leiognathi).